Reading from the N-terminus, the 232-residue chain is Putative B3 domain-containing protein Os11g0242900 (232 aa).

Residues 1 to 51 (MTVELEKIAGSFFISKGWKTFVHRTGLLSGQYIRFQVLTPSKINVLLFDKK) constitute a DNA-binding region (TF-B3 1). The interval 92–121 (SHTSNKETSSDSRTESMTDIPSSSDNSGET) is disordered. Positions 95-107 (SNKETSSDSRTES) are enriched in basic and acidic residues. Over residues 108–121 (MTDIPSSSDNSGET) the composition is skewed to polar residues. Residues 140–232 (DIKNYISIIG…PNVKITIDVL (93 aa)) constitute a DNA-binding region (TF-B3 2).

It localises to the nucleus. The chain is Putative B3 domain-containing protein Os11g0242900 from Oryza sativa subsp. japonica (Rice).